The sequence spans 146 residues: Hemoglobin subunit beta (146 aa).

The Globin domain maps to 2–146 (FLTAEEKGLV…VASALAHRYH (145 aa)). Position 44 is a phosphoserine (S44). K59 carries the N6-acetyllysine modification. H63 contributes to the heme b binding site. K82 is modified (N6-acetyllysine). H92 provides a ligand contact to heme b. C93 bears the S-nitrosocysteine mark.

The protein belongs to the globin family. In terms of assembly, heterotetramer of two alpha chains and two beta chains. As to expression, red blood cells.

Involved in oxygen transport from the lung to the various peripheral tissues. The chain is Hemoglobin subunit beta (HBB) from Paguma larvata (Masked palm civet).